The following is a 139-amino-acid chain: Myosin light chain kinase, smooth muscle (139 aa).

Positions 48-97 are disordered; sequence APTGENAKAPEMKARRPKSSLPPVLGTESDATVKKKPAPKTPPKAAMPPQ.

Belongs to the protein kinase superfamily. CAMK Ser/Thr protein kinase family. Interacts with SVIL. The C-terminus is deglutamylated by AGTPBP1/CCP1, AGBL1/CCP4 and AGBL4/CCP6, leading to the formation of Myosin light chain kinase, smooth muscle, deglutamylated form. The consequences of C-terminal deglutamylation are unknown.

The enzyme catalyses L-seryl-[myosin light chain] + ATP = O-phospho-L-seryl-[myosin light chain] + ADP + H(+). The catalysed reaction is L-threonyl-[myosin light chain] + ATP = O-phospho-L-threonyl-[myosin light chain] + ADP + H(+). Phosphorylates a specific serine in the N-terminus of a myosin light chain. Also regulates actin-myosin interaction through a non-kinase activity. The protein is Myosin light chain kinase, smooth muscle (MYLK) of Sus scrofa (Pig).